The following is a 93-amino-acid chain: Small ribosomal subunit protein uS19c (93 aa).

The segment at 73–93 (EFSPTRTFRGHTKSDKKSRRP) is disordered. A compositionally biased stretch (basic residues) spans 80–93 (FRGHTKSDKKSRRP).

The protein belongs to the universal ribosomal protein uS19 family.

The protein resides in the plastid. It is found in the chloroplast. Its function is as follows. Protein S19 forms a complex with S13 that binds strongly to the 16S ribosomal RNA. This chain is Small ribosomal subunit protein uS19c (rps19), found in Mesostigma viride (Green alga).